A 202-amino-acid chain; its full sequence is Homeobox protein ceh-13 (202 aa).

2 disordered regions span residues 60–83 (PATASGLSPPASRSSNSSAELPTG) and 166–202 (RMKEKKREKEKAFLARNTWESNSPTSSCSGEDVKNFK). Low complexity predominate over residues 63–81 (ASGLSPPASRSSNSSAELP). The homeobox DNA-binding region spans 114-173 (NGTNRTNFTTHQLTELEKEFHTAKYVNRTRRTEIASNLKLQEAQVKIWFQNRRMKEKKRE). Over residues 183-194 (TWESNSPTSSCS) the composition is skewed to polar residues.

The protein resides in the nucleus. In Caenorhabditis elegans, this protein is Homeobox protein ceh-13 (ceh-13).